Consider the following 312-residue polypeptide: sn-1-specific diacylglycerol lipase ABHD11 (312 aa).

The transit peptide at 1–14 (MITFKSFHCSRGWH) directs the protein to the mitochondrion. In terms of domain architecture, AB hydrolase-1 spans 62-297 (PPLVLLHGLF…GAGHWVHADK (236 aa)). Catalysis depends on charge relay system residues Ser136, Glu232, and His291.

The protein belongs to the AB hydrolase superfamily. In terms of processing, phosphorylated.

The protein localises to the mitochondrion. It localises to the mitochondrion matrix. It carries out the reaction 1-octadecanoyl-2-(5Z,8Z,11Z,14Z-eicosatetraenoyl)-sn-glycerol + H2O = 2-(5Z,8Z,11Z,14Z-eicosatetraenoyl)-glycerol + octadecanoate + H(+). The enzyme catalyses a 1,2-diacyl-sn-glycerol + H2O = a 2-acylglycerol + a fatty acid + H(+). It catalyses the reaction a 1,3-diacyl-sn-glycerol + H2O = a 1-acyl-sn-glycerol + a fatty acid + H(+). The catalysed reaction is 1-octadecanoyl-2-(9Z-octadecenoyl)-sn-glycerol + H2O = 2-(9Z-octadecenoyl)-glycerol + octadecanoate + H(+). It carries out the reaction 1-octadecanoyl-2-(4Z,7Z,10Z,13Z,16Z,19Z-docosahexaenoyl)-sn-glycerol + H2O = 2-(4Z,7Z,10Z,13Z,16Z,19Z-docosahexaenoyl)-glycerol + octadecanoate + H(+). The enzyme catalyses 1,2-didecanoylglycerol + H2O = decanoylglycerol + decanoate + H(+). Its function is as follows. Catalyzes the hydrolysis of diacylglycerol in vitro and may function as a key regulator in lipid metabolism, namely by regulating the intracellular levels of diacylglycerol. 1,2-diacyl-sn-glycerols are the preferred substrate over 1,3-diacyl-sn-glycerols. The enzyme hydrolyzes stearate in preference to palmitate from the sn-1 position of 1,2-diacyl-sn-glycerols. The sequence is that of sn-1-specific diacylglycerol lipase ABHD11 from Xenopus laevis (African clawed frog).